Consider the following 167-residue polypeptide: Brain ribonuclease (167 aa).

Positions 1-26 (MALKSLVLLSLLVLVLLLVQVQPSLG) are cleaved as a signal peptide. Substrate is bound by residues Lys33 and Arg36. His38 (proton acceptor) is an active-site residue. 4 cysteine pairs are disulfide-bonded: Cys52–Cys110, Cys66–Cys121, Cys84–Cys136, and Cys91–Cys98. 67–71 (KPVNT) contributes to the substrate binding site. Residue Asn88 is glycosylated (N-linked (GlcNAc...) asparagine). Residues Lys92 and Arg111 each coordinate substrate. The Proton donor role is filled by His145. O-linked (GalNAc...) threonine glycosylation occurs at Thr155. An O-linked (GalNAc...) serine glycan is attached at Ser159.

Belongs to the pancreatic ribonuclease family.

It is found in the secreted. In Bos taurus (Bovine), this protein is Brain ribonuclease (BRN).